A 108-amino-acid chain; its full sequence is Glutaredoxin 4 (108 aa).

The Glutaredoxin domain occupies 5 to 107 (IKKIQNQIQN…KTISICDKLN (103 aa)). Glutathione is bound at residue Lys-22. Cys-30 is a binding site for [2Fe-2S] cluster. Residues Arg-59, Phe-71, and 84 to 85 (CN) contribute to the glutathione site.

Belongs to the glutaredoxin family. Monothiol subfamily. As to quaternary structure, homodimer.

The protein localises to the cytoplasm. Functionally, monothiol glutaredoxin involved in the biogenesis of iron-sulfur clusters. The polypeptide is Glutaredoxin 4 (grxD) (Buchnera aphidicola subsp. Baizongia pistaciae (strain Bp)).